The chain runs to 611 residues: Endo-1,4-beta-xylanase A (611 aa).

Positions 1 to 26 (MRTAMAKSLGAAAFLGAALFAHTLAA) are cleaved as a signal peptide. The CBM2 domain maps to 27–128 (QTATCSYNIT…SVGGSICSGS (102 aa)). 3 disulfides stabilise this stretch: C31–C125, C184–C215, and C194–C209. The region spanning 183-212 (QCNWYGTLYPLCVTTTNGWGWEDQRSCIAR) is the CBM10 domain. One can recognise a GH10 domain in the interval 281–607 (SGGNADIFTS…KPAYQGVVEA (327 aa)). Residue E391 is the Proton donor of the active site. E510 (nucleophile) is an active-site residue.

This sequence belongs to the glycosyl hydrolase 10 (cellulase F) family.

It carries out the reaction Endohydrolysis of (1-&gt;4)-beta-D-xylosidic linkages in xylans.. Its pathway is glycan degradation; xylan degradation. This Cellvibrio japonicus (strain Ueda107) (Pseudomonas fluorescens subsp. cellulosa) protein is Endo-1,4-beta-xylanase A (xynA).